Reading from the N-terminus, the 272-residue chain is MPLVDPVTMSSSAIVKGAVAQSTSTTKSTPGSQATESSTTTAGSSSSLATLRPVQIKQTPAAQTVRHALPAALTALYLLRFDALVTNPVPVMLNALPVVAAFQMTYALLCLPAAGEPASKSNRKPRPGEKKKGGDIGSSTIITALLASVLTSIVTPFLYFAMVLFGAPFLTHGSHTFLCAAHLALLTLFPLFYVHGVDSAAWAAVGGFRAPLDETFGGLVGGIVGAWLGAVPIPLDWDREWQRWPVTILCGAYGGYLLGRVLGGTLFWGKKF.

A compositionally biased stretch (polar residues) spans 21–31; the sequence is QSTSTTKSTPG. Positions 21-48 are disordered; that stretch reads QSTSTTKSTPGSQATESSTTTAGSSSSL. Residues 32–48 show a composition bias toward low complexity; sequence SQATESSTTTAGSSSSL. The next 5 membrane-spanning stretches (helical) occupy residues 91–111, 145–165, 177–197, 215–235, and 248–268; these read VMLN…LLCL, LLAS…MVLF, FLCA…VHGV, TFGG…PIPL, and ILCG…TLFW.

It belongs to the PIGF family.

The protein localises to the endoplasmic reticulum membrane. Its pathway is glycolipid biosynthesis; glycosylphosphatidylinositol-anchor biosynthesis. Acts in the GPI biosynthetic pathway between GlcNAc-PI synthesis and GPI transfer to protein. The protein is Glycosylphosphatidylinositol anchor biosynthesis protein 11 (gpi-11) of Neurospora crassa (strain ATCC 24698 / 74-OR23-1A / CBS 708.71 / DSM 1257 / FGSC 987).